The sequence spans 283 residues: Zip homologous protein 4 (283 aa).

The RING-type zinc-finger motif lies at 6–50 (CFRCYKFPSKQIEFYLTNCMHMFCIECERLCHPPEEEPLKCIQCS). Disordered stretches follow at residues 149-175 (KKQLAEQAPPPQTPPRSNSLKVASSRS) and 201-283 (TKAQ…RNSQ). The segment covering 163 to 175 (PRSNSLKVASSRS) has biased composition (polar residues). Over residues 202–216 (KAQAKAEAEAEAPAK) the composition is skewed to low complexity. A compositionally biased stretch (polar residues) spans 220–235 (SKAQTTKCTSNYQSHP). A compositionally biased stretch (basic and acidic residues) spans 267 to 283 (KKHEAQREKHKEHRNSQ).

In terms of assembly, interacts with zhp-3; the interaction is required for their localization along paired chromosomes and stability, and for the formation of chiasma during meiotic recombination. Expressed in the germline.

The protein resides in the chromosome. Recruited co-dependently with zhp-3 to the synaptonemal complex between homologous chromosome pairs to regulate the formation and number of crossover events between homologs during meiotic recombination. In the early stages of pachytene, in complex with zhp-4, recruited by the zhp-1-zhp-2 heterodimer to designated crossover sites along the recombination intermediate to stabilize other pro-crossover factors such as rmh-1, msh-5 and cosa-1. This in turn facilitates crossover and promotes the formation of chiasma in each meiotic nucleus at the late pachytene stage of meiosis. Negatively regulates double strand break formation to promote formation of the crossover intermediate. In Caenorhabditis elegans, this protein is Zip homologous protein 4.